The chain runs to 79 residues: Short neurotoxin 2 (79 aa).

A signal peptide spans 1–19 (PLLLTLVVVTIVCLDLGYT). 4 disulfides stabilise this stretch: cysteine 22–cysteine 41, cysteine 36–cysteine 58, cysteine 60–cysteine 71, and cysteine 72–cysteine 77.

Belongs to the three-finger toxin family. Short-chain subfamily. Type I alpha-neurotoxin sub-subfamily. As to expression, expressed by the venom gland.

It is found in the secreted. Functionally, binds to muscle nicotinic acetylcholine receptor (nAChR) and inhibit acetylcholine from binding to the receptor, thereby impairing neuromuscular transmission. The protein is Short neurotoxin 2 of Hydrophis cyanocinctus (Asian annulated sea snake).